Here is a 121-residue protein sequence, read N- to C-terminus: Large ribosomal subunit protein uL22 (121 aa).

This sequence belongs to the universal ribosomal protein uL22 family. In terms of assembly, part of the 50S ribosomal subunit.

In terms of biological role, this protein binds specifically to 23S rRNA; its binding is stimulated by other ribosomal proteins, e.g. L4, L17, and L20. It is important during the early stages of 50S assembly. It makes multiple contacts with different domains of the 23S rRNA in the assembled 50S subunit and ribosome. Its function is as follows. The globular domain of the protein is located near the polypeptide exit tunnel on the outside of the subunit, while an extended beta-hairpin is found that lines the wall of the exit tunnel in the center of the 70S ribosome. This Micrococcus luteus (strain ATCC 4698 / DSM 20030 / JCM 1464 / CCM 169 / CCUG 5858 / IAM 1056 / NBRC 3333 / NCIMB 9278 / NCTC 2665 / VKM Ac-2230) (Micrococcus lysodeikticus) protein is Large ribosomal subunit protein uL22.